A 524-amino-acid chain; its full sequence is Probable cytochrome P450 519C1 (524 aa).

Residues 1 to 21 (MNILLLIFYFLVCFLIFDFIK) form a helical membrane-spanning segment. C470 is a binding site for heme.

It belongs to the cytochrome P450 family. It depends on heme as a cofactor.

Its subcellular location is the membrane. The protein is Probable cytochrome P450 519C1 (cyp519C1) of Dictyostelium discoideum (Social amoeba).